The primary structure comprises 277 residues: Myelin proteolipid protein (277 aa).

Residues 1–10 are Cytoplasmic-facing; it reads MGLLECCARC. 3 S-palmitoyl cysteine lipidation sites follow: Cys-6, Cys-7, and Cys-10. Residues 11-36 traverse the membrane as a helical segment; it reads LVGAPFASLVATGLCFFGVALFCGCG. Topologically, residues 37–59 are extracellular; that stretch reads HEALTGTEKLIETYFSKNYQDYE. The helical transmembrane segment at 60–88 threads the bilayer; the sequence is YLINVIHAFQYVIYGTASFFFLYGALLLA. At 89-151 the chain is on the cytoplasmic side; that stretch reads EGFYTTGAVR…LGKWLGHPDK (63 aa). The S-palmitoyl cysteine moiety is linked to residue Cys-109. Ser-114 carries the post-translational modification Phosphoserine. Thr-116 and Thr-118 each carry phosphothreonine. The S-palmitoyl cysteine moiety is linked to residue Cys-141. Residues 152-178 traverse the membrane as a helical segment; that stretch reads FVGITYALTVVWLLVFACSAVPVYIYF. At 179–238 the chain is on the extracellular side; that stretch reads NTWTTCQSIAFPSKTSASIGSLCADARMYGVLPWNAFPGKVCGSNLLSICKTAEFQMTFH. Intrachain disulfides connect Cys-184–Cys-228 and Cys-201–Cys-220. Ser-199 is lipidated: O-palmitoyl serine. The helical transmembrane segment at 239-268 threads the bilayer; sequence LFIAAFVGAAATLISLLTFMIAATYNFAVL. Topologically, residues 269–277 are cytoplasmic; it reads KLMGRGTKF.

It belongs to the myelin proteolipid protein family.

It localises to the cell membrane. The protein localises to the myelin membrane. Its function is as follows. This is the major myelin protein from the central nervous system. It plays an important role in the formation or maintenance of the multilamellar structure of myelin. The polypeptide is Myelin proteolipid protein (PLP1) (Macaca fascicularis (Crab-eating macaque)).